The chain runs to 244 residues: Pyridoxine 5'-phosphate synthase (244 aa).

Residue Asn9 participates in 3-amino-2-oxopropyl phosphate binding. 11 to 12 provides a ligand contact to 1-deoxy-D-xylulose 5-phosphate; the sequence is DH. Arg20 is a 3-amino-2-oxopropyl phosphate binding site. The active-site Proton acceptor is the His45. 2 residues coordinate 1-deoxy-D-xylulose 5-phosphate: Arg47 and His52. Catalysis depends on Glu72, which acts as the Proton acceptor. Thr102 lines the 1-deoxy-D-xylulose 5-phosphate pocket. Catalysis depends on His193, which acts as the Proton donor. 3-amino-2-oxopropyl phosphate-binding positions include Gly194 and 215-216; that span reads GH.

This sequence belongs to the PNP synthase family. In terms of assembly, homooctamer; tetramer of dimers.

It is found in the cytoplasm. The catalysed reaction is 3-amino-2-oxopropyl phosphate + 1-deoxy-D-xylulose 5-phosphate = pyridoxine 5'-phosphate + phosphate + 2 H2O + H(+). Its pathway is cofactor biosynthesis; pyridoxine 5'-phosphate biosynthesis; pyridoxine 5'-phosphate from D-erythrose 4-phosphate: step 5/5. Its function is as follows. Catalyzes the complicated ring closure reaction between the two acyclic compounds 1-deoxy-D-xylulose-5-phosphate (DXP) and 3-amino-2-oxopropyl phosphate (1-amino-acetone-3-phosphate or AAP) to form pyridoxine 5'-phosphate (PNP) and inorganic phosphate. The polypeptide is Pyridoxine 5'-phosphate synthase (Blochmanniella pennsylvanica (strain BPEN)).